The sequence spans 334 residues: Probable fructose-bisphosphate aldolase class 1 (334 aa).

This sequence belongs to the class I fructose-bisphosphate aldolase family.

The catalysed reaction is beta-D-fructose 1,6-bisphosphate = D-glyceraldehyde 3-phosphate + dihydroxyacetone phosphate. It participates in carbohydrate degradation; glycolysis; D-glyceraldehyde 3-phosphate and glycerone phosphate from D-glucose: step 4/4. This Xylella fastidiosa (strain Temecula1 / ATCC 700964) protein is Probable fructose-bisphosphate aldolase class 1.